The chain runs to 88 residues: DNA-directed RNA polymerase subunit omega (88 aa).

Belongs to the RNA polymerase subunit omega family. The RNAP catalytic core consists of 2 alpha, 1 beta, 1 beta' and 1 omega subunit. When a sigma factor is associated with the core the holoenzyme is formed, which can initiate transcription.

It catalyses the reaction RNA(n) + a ribonucleoside 5'-triphosphate = RNA(n+1) + diphosphate. In terms of biological role, promotes RNA polymerase assembly. Latches the N- and C-terminal regions of the beta' subunit thereby facilitating its interaction with the beta and alpha subunits. The polypeptide is DNA-directed RNA polymerase subunit omega (Salinispora tropica (strain ATCC BAA-916 / DSM 44818 / JCM 13857 / NBRC 105044 / CNB-440)).